Reading from the N-terminus, the 335-residue chain is Pyridoxal 5'-phosphate synthase subunit PdxS (335 aa).

D30 is a binding site for D-ribose 5-phosphate. K87 acts as the Schiff-base intermediate with D-ribose 5-phosphate in catalysis. G159 provides a ligand contact to D-ribose 5-phosphate. D-glyceraldehyde 3-phosphate is bound at residue R171. D-ribose 5-phosphate contacts are provided by residues G257 and G278 to S279.

This sequence belongs to the PdxS/SNZ family. As to quaternary structure, in the presence of PdxT, forms a dodecamer of heterodimers.

The catalysed reaction is aldehydo-D-ribose 5-phosphate + D-glyceraldehyde 3-phosphate + L-glutamine = pyridoxal 5'-phosphate + L-glutamate + phosphate + 3 H2O + H(+). Its pathway is cofactor biosynthesis; pyridoxal 5'-phosphate biosynthesis. Catalyzes the formation of pyridoxal 5'-phosphate from ribose 5-phosphate (RBP), glyceraldehyde 3-phosphate (G3P) and ammonia. The ammonia is provided by the PdxT subunit. Can also use ribulose 5-phosphate and dihydroxyacetone phosphate as substrates, resulting from enzyme-catalyzed isomerization of RBP and G3P, respectively. The chain is Pyridoxal 5'-phosphate synthase subunit PdxS from Pyrococcus furiosus (strain ATCC 43587 / DSM 3638 / JCM 8422 / Vc1).